A 56-amino-acid chain; its full sequence is Botcinic acid biosynthesis cluster B protein 14 (56 aa).

The protein operates within polyketide biosynthesis. In terms of biological role, part of the gene cluster B that mediates the biosynthesis of botcinic acid and its botcinin derivatives, acetate-derived polyketides that contribute to virulence when combined with the sesquiterpene botrydial. Botcinic acid and its derivatives have been shown to induce chlorosis and necrosis during host plant infection, but also have antifungal activities. Two polyketide synthases, BOA6 and BOA9, are involved in the biosynthesis of botcinins. BOA6 mediates the formation of the per-methylated tetraketide core by condensation of four units of malonyl-CoA with one unit of acetyl-CoA, which would be methylated in activated methylene groups to yield a bicyclic acid intermediate that could then either be converted to botrylactone derivatives or lose the starter acetate unit through a retro-Claisen type C-C bond cleavage to yield botcinin derivatives. The second polyketide synthase, BOA9, is probably required for the biosynthesis of the tetraketide side chain of botcinins. The methyltransferase (MT) domain within BOA6 is probably responsible for the incorporation of four methyl groups. The trans-enoyl reductase BOA5 might take over the enoyl reductase function of BOA6 that misses an ER domain. The monooxygenases BOA2, BOA3 and BOA4 might be involved in further hydroxylations at C4, C5 and C8, whereas BOA7, close to BOA9, could potentially be involved in the hydroxylation at C4 in the side chain of botcinins. This chain is Botcinic acid biosynthesis cluster B protein 14, found in Botryotinia fuckeliana (strain B05.10) (Noble rot fungus).